The primary structure comprises 466 residues: Cysteine--tRNA ligase (466 aa).

Cysteine 29 provides a ligand contact to Zn(2+). The short motif at 31–41 (PTVYNYIHIGN) is the 'HIGH' region element. 3 residues coordinate Zn(2+): cysteine 209, histidine 234, and glutamate 238. A 'KMSKS' region motif is present at residues 266–270 (KMSKS). Lysine 269 lines the ATP pocket.

Belongs to the class-I aminoacyl-tRNA synthetase family. Monomer. Requires Zn(2+) as cofactor.

It is found in the cytoplasm. The enzyme catalyses tRNA(Cys) + L-cysteine + ATP = L-cysteinyl-tRNA(Cys) + AMP + diphosphate. The polypeptide is Cysteine--tRNA ligase (Lysinibacillus sphaericus (strain C3-41)).